Reading from the N-terminus, the 678-residue chain is Chloride channel protein ClC-Kb (678 aa).

Over 1 to 50 (MEELVGLREGSSGNPVALRELWSPCPRLRRGIRGGLEWLKQKLFRVGEDW) the chain is Cytoplasmic. 2 helical membrane passes run 51 to 82 (YFLM…KWLY) and 91 to 111 (LRYL…SGFS). Positions 116 to 127 (PFSGGSGIPELK) form an intramembrane region, helical. Ser121 contacts chloride. The next 2 membrane-spanning stretches (helical) occupy residues 141–160 (IKNF…TGST) and 161–180 (LFLG…AAYL). An intramembrane region (helical) is located at residues 203 to 224 (AGAAVGVATVFAAPFSGVLFCI). A helical membrane pass occupies residues 236–255 (YWRGFFAATCGAFMFRLLAV). Residues Glu259, Glu261, Asp278, and Glu281 each contribute to the Ca(2+) site. The next 2 membrane-spanning stretches (helical) occupy residues 282-310 (IFFF…LAFT) and 325-342 (PLYA…TYPP). Residues 349–360 (ASRLSMREHLDT) constitute an intramembrane region (helical). Asn364 is a glycosylation site (N-linked (GlcNAc...) asparagine). Helical transmembrane passes span 400–420 (GTLA…TTIP) and 421–440 (MPAG…GRLL). Position 426 (Phe426) interacts with chloride. Positions 464 to 496 (GGYALAGAAAFSGAVTHSISTALLAFELTGQIV) form an intramembrane region, helical. A helical membrane pass occupies residues 500–520 (PVLMAVLAANAIAQSCQPSFY). The Cytoplasmic segment spans residues 521–678 (DGTIMVKKLP…SWVERQHTGF (158 aa)). CBS domains follow at residues 551 to 612 (MRRA…ARAS) and 620 to 678 (DILA…HTGF).

The protein belongs to the chloride channel (TC 2.A.49) family. CLCNKB subfamily. As to quaternary structure, homodimer. Interacts with BSND. N-glycosylated. As to expression, expressed predominantly in the kidney.

It is found in the basolateral cell membrane. It carries out the reaction chloride(in) = chloride(out). It catalyses the reaction iodide(out) = iodide(in). The catalysed reaction is nitrate(in) = nitrate(out). The enzyme catalyses bromide(in) = bromide(out). Functionally, anion-selective channel permeable to small monovalent anions with ion selectivity for chloride &gt; bromide &gt; nitrate &gt; iodide. Forms a homodimeric channel where each subunit has its own ion conduction pathway. May conduct double-barreled currents controlled by two types of gates, two fast gates that control each subunit independently and a slow common gate that opens and shuts off both subunits simultaneously. Assembles with the regulatory subunit BSND/Barttin for sorting at the basolateral plasma membrane domain and functional switch to the ion conducting state. CLCNKB:BSND channels display mostly a linear current-voltage relationship controlled by common gate. Mediates chloride conductance along nephron segments, namely the thick ascending limb of Henle's loop, convoluted tubule and the collecting duct, contributing to the maintenance of systemic acid-base and electrolyte homeostasis. Conducts chloride currents in the stria vascularis of the inner ear to establish the endocochlear potential necessary for normal hearing. The sequence is that of Chloride channel protein ClC-Kb (CLCNKB) from Oryctolagus cuniculus (Rabbit).